The chain runs to 615 residues: 1-deoxy-D-xylulose-5-phosphate synthase (615 aa).

Thiamine diphosphate-binding positions include H76 and 117-119 (GHS). D148 contributes to the Mg(2+) binding site. Thiamine diphosphate-binding positions include 149 to 150 (GA), N177, Y284, and E365. N177 provides a ligand contact to Mg(2+).

This sequence belongs to the transketolase family. DXPS subfamily. As to quaternary structure, homodimer. The cofactor is Mg(2+). It depends on thiamine diphosphate as a cofactor.

It carries out the reaction D-glyceraldehyde 3-phosphate + pyruvate + H(+) = 1-deoxy-D-xylulose 5-phosphate + CO2. It functions in the pathway metabolic intermediate biosynthesis; 1-deoxy-D-xylulose 5-phosphate biosynthesis; 1-deoxy-D-xylulose 5-phosphate from D-glyceraldehyde 3-phosphate and pyruvate: step 1/1. Its function is as follows. Catalyzes the acyloin condensation reaction between C atoms 2 and 3 of pyruvate and glyceraldehyde 3-phosphate to yield 1-deoxy-D-xylulose-5-phosphate (DXP). The sequence is that of 1-deoxy-D-xylulose-5-phosphate synthase from Francisella tularensis subsp. novicida (strain U112).